The following is a 509-amino-acid chain: Steroid 17-alpha-hydroxylase/17,20 lyase (509 aa).

Residue Cys445 coordinates heme.

It belongs to the cytochrome P450 family. The cofactor is heme.

It is found in the membrane. It carries out the reaction a C21-steroid + reduced [NADPH--hemoprotein reductase] + O2 = a 17alpha-hydroxy-C21-steroid + oxidized [NADPH--hemoprotein reductase] + H2O + H(+). It catalyses the reaction 17alpha-hydroxyprogesterone + reduced [NADPH--hemoprotein reductase] + O2 = androst-4-ene-3,17-dione + acetate + oxidized [NADPH--hemoprotein reductase] + H2O + 2 H(+). The enzyme catalyses 17alpha-hydroxypregnenolone + reduced [NADPH--hemoprotein reductase] + O2 = 3beta-hydroxyandrost-5-en-17-one + acetate + oxidized [NADPH--hemoprotein reductase] + H2O + 2 H(+). It participates in lipid metabolism; steroid biosynthesis. Functionally, conversion of pregnenolone and progesterone to their 17-alpha-hydroxylated products and subsequently to dehydroepiandrosterone (DHEA) and androstenedione. Catalyzes both the 17-alpha-hydroxylation and the 17,20-lyase reaction. The chain is Steroid 17-alpha-hydroxylase/17,20 lyase (CYP17A1) from Squalus acanthias (Spiny dogfish).